The sequence spans 172 residues: MNNYIFVLSSLFLVGCLGLALKPSPIYGGLGLIVSGFVGCLMVLGFGGSFLGLMVFLIYLGGMLVVFGYTTAMATEEYPETWGSNWLILGFLVLGVIMEVFLICVLNYYDEVGVINLDGLGDWLMYEVDDVGVMLEGGIGVAAMYSCATWMMVVAGWSLFAGIFIIIEITRD.

Transmembrane regions (helical) follow at residues 1 to 21, 38 to 58, 86 to 106, and 147 to 167; these read MNNY…GLAL, VGCL…VFLI, WLIL…ICVL, and CATW…FIII.

The protein belongs to the complex I subunit 6 family. As to quaternary structure, core subunit of respiratory chain NADH dehydrogenase (Complex I) which is composed of 45 different subunits.

The protein localises to the mitochondrion inner membrane. The enzyme catalyses a ubiquinone + NADH + 5 H(+)(in) = a ubiquinol + NAD(+) + 4 H(+)(out). In terms of biological role, core subunit of the mitochondrial membrane respiratory chain NADH dehydrogenase (Complex I) which catalyzes electron transfer from NADH through the respiratory chain, using ubiquinone as an electron acceptor. Essential for the catalytic activity and assembly of complex I. In Mus musculus (Mouse), this protein is NADH-ubiquinone oxidoreductase chain 6 (Mtnd6).